The sequence spans 511 residues: V-type proton ATPase subunit B (511 aa).

Position 381 (arginine 381) interacts with ATP. The tract at residues 484 to 511 (FYGRDREQDDDEEEEEDPDKSGDKLIDA) is disordered. The span at 491–501 (QDDDEEEEEDP) shows a compositional bias: acidic residues. The span at 502–511 (DKSGDKLIDA) shows a compositional bias: basic and acidic residues.

Belongs to the ATPase alpha/beta chains family. As to quaternary structure, V-ATPase is a heteromultimeric enzyme composed of a peripheral catalytic V1 complex (components A to H) attached to an integral membrane V0 proton pore complex (components: a, c, c', c'', d, e, f and VOA1).

The protein localises to the vacuole membrane. Its function is as follows. Non-catalytic subunit of the V1 complex of vacuolar(H+)-ATPase (V-ATPase), a multisubunit enzyme composed of a peripheral complex (V1) that hydrolyzes ATP and a membrane integral complex (V0) that translocates protons. V-ATPase is responsible for acidifying and maintaining the pH of intracellular compartments. This Candida tropicalis (Yeast) protein is V-type proton ATPase subunit B (VMA2).